Consider the following 315-residue polypeptide: MDLRQFLMCLSLCTAFALSKPTEKKDRVHHEPQLSDKVHNDAQSFDYDHDAFLGAEEAKTFDQLTPEESKERLGKIVSKIDDDKDGFVTVDELKDWIKFAQKRWIYEDVERQWKGHDLNEDGLVSWEEYKNATYGYVLDDPDPDDGFNYKQMMVRDERRFKMADKDGDLIATKEEFTAFLHPEEYDYMKDIVVQETMEDIDKNADGFIDLEEYIGDMYSHDGNTDEPEWVKTEREQFVEFRDKNRDGKMDKEETKDWILPSDYDHAEAEARHLVYESDQNKDGKLTKEEIVDKYDLFVGSQATDFGEALVRHDEF.

Positions 1–19 are cleaved as a signal peptide; sequence MDLRQFLMCLSLCTAFALS. Phosphoserine is present on Ser-44. Phosphotyrosine is present on Tyr-47. Phosphothreonine is present on Thr-65. EF-hand domains lie at 68–103, 104–139, 151–186, 188–223, 229–264, and 265–300; these read ESKE…AQKR, WIYE…YVLD, QMMV…EEYD, MKDI…HDGN, WVKT…SDYD, and HAEA…FVGS. A Phosphoserine modification is found at Ser-69. Ca(2+) is bound by residues Asp-81, Asp-83, Asp-85, Glu-92, Asp-117, Asn-119, Asp-121, and Glu-128. Asn-131 carries an N-linked (GlcNAc...) asparagine glycan. Asp-164 contributes to the Ca(2+) binding site. Lys-165 bears the N6-acetyllysine mark. Positions 166, 168, 175, 201, 203, 205, 212, 242, 244, 246, 248, and 253 each coordinate Ca(2+). At Thr-254 the chain carries Phosphothreonine. Ser-261 and Ser-277 each carry phosphoserine. Ca(2+) is bound by residues Asp-278, Asn-280, Asp-282, Lys-284, and Glu-289. Positions 312–315 match the Prevents secretion from ER motif; that stretch reads HDEF.

The protein belongs to the CREC family. In terms of assembly, interacts with GGCX.

It localises to the endoplasmic reticulum membrane. The protein localises to the golgi apparatus. It is found in the secreted. Its subcellular location is the melanosome. The protein resides in the sarcoplasmic reticulum lumen. Functionally, involved in regulation of vitamin K-dependent carboxylation of multiple N-terminal glutamate residues. Seems to inhibit gamma-carboxylase GGCX. Binds 7 calcium ions with a low affinity. The protein is Calumenin (CALU) of Pongo abelii (Sumatran orangutan).